A 605-amino-acid polypeptide reads, in one-letter code: DNA mismatch repair protein MutL (605 aa).

It belongs to the DNA mismatch repair MutL/HexB family.

In terms of biological role, this protein is involved in the repair of mismatches in DNA. It is required for dam-dependent methyl-directed DNA mismatch repair. May act as a 'molecular matchmaker', a protein that promotes the formation of a stable complex between two or more DNA-binding proteins in an ATP-dependent manner without itself being part of a final effector complex. This chain is DNA mismatch repair protein MutL, found in Rhizobium meliloti (strain 1021) (Ensifer meliloti).